We begin with the raw amino-acid sequence, 172 residues long: Co-chaperone protein HscB homolog (172 aa).

The J domain maps to 2–74 (NYFELFGLVE…LRRAEYLLSL (73 aa)).

Belongs to the HscB family. In terms of assembly, interacts with HscA and stimulates its ATPase activity.

Co-chaperone involved in the maturation of iron-sulfur cluster-containing proteins. Seems to help targeting proteins to be folded toward HscA. In Aeromonas hydrophila subsp. hydrophila (strain ATCC 7966 / DSM 30187 / BCRC 13018 / CCUG 14551 / JCM 1027 / KCTC 2358 / NCIMB 9240 / NCTC 8049), this protein is Co-chaperone protein HscB homolog.